The chain runs to 259 residues: MSYKVIIPARYGASRLPGKPLLDLAGKPMLLHVVEKAQKSGAEEVLVATDDRRIEAIVQNHGVQVCMTSVQHDSGTNRLAEAVTQKDYPDQTIIINVQGDEPLLPPSLITQAAEDLKTHPKADIATLCVPIANREELFDPNIVKVVRDIQGYALYFSRAPIPWAREDFAAKTGNRWPTSWSYYRHVGLYAYRASFLRRYPQLPVSPLEQAECLEQLRVLYHGGRIHVAIAGTIPPPGVDTLADLERVRQLLVTQERNHN.

Belongs to the KdsB family.

It localises to the cytoplasm. It catalyses the reaction 3-deoxy-alpha-D-manno-oct-2-ulosonate + CTP = CMP-3-deoxy-beta-D-manno-octulosonate + diphosphate. Its pathway is nucleotide-sugar biosynthesis; CMP-3-deoxy-D-manno-octulosonate biosynthesis; CMP-3-deoxy-D-manno-octulosonate from 3-deoxy-D-manno-octulosonate and CTP: step 1/1. The protein operates within bacterial outer membrane biogenesis; lipopolysaccharide biosynthesis. In terms of biological role, activates KDO (a required 8-carbon sugar) for incorporation into bacterial lipopolysaccharide in Gram-negative bacteria. In Nitrosococcus oceani (strain ATCC 19707 / BCRC 17464 / JCM 30415 / NCIMB 11848 / C-107), this protein is 3-deoxy-manno-octulosonate cytidylyltransferase.